Consider the following 511-residue polypeptide: Transcription factor bHLH28 (511 aa).

The region spanning 339-388 (DKPLNHVEAERMRREKLNHRFYALRAVVPNVSKMDKTSLLEDAVCYINEL) is the bHLH domain.

As to quaternary structure, homodimer.

The protein localises to the nucleus. The protein is Transcription factor bHLH28 (BHLH28) of Arabidopsis thaliana (Mouse-ear cress).